Here is a 327-residue protein sequence, read N- to C-terminus: 2-methoxy-6-polyprenyl-1,4-benzoquinol methylase, mitochondrial (327 aa).

A mitochondrion-targeting transit peptide spans 1-43 (MAAPIRAFVLRVLSDSTRNIHHVLRCRSKYLCRRAAITARRGY). Residues Thr-117, Asp-171, and 199–200 (DA) contribute to the S-adenosyl-L-methionine site.

It belongs to the class I-like SAM-binding methyltransferase superfamily. MenG/UbiE family. In terms of assembly, component of a multi-subunit COQ enzyme complex, composed of at least coq3, coq4, coq5, coq6, coq7 and coq9.

The protein resides in the mitochondrion inner membrane. It carries out the reaction a 2-methoxy-6-(all-trans-polyprenyl)benzene-1,4-diol + S-adenosyl-L-methionine = a 5-methoxy-2-methyl-3-(all-trans-polyprenyl)benzene-1,4-diol + S-adenosyl-L-homocysteine + H(+). It participates in cofactor biosynthesis; ubiquinone biosynthesis. In terms of biological role, methyltransferase required for the conversion of 2-polyprenyl-6-methoxy-1,4-benzoquinol (DDMQH2) to 2-polyprenyl-3-methyl-6-methoxy-1,4-benzoquinol (DMQH2). This Danio rerio (Zebrafish) protein is 2-methoxy-6-polyprenyl-1,4-benzoquinol methylase, mitochondrial.